The chain runs to 112 residues: Secretoglobin family 2B member 20 (112 aa).

The first 23 residues, 1–23, serve as a signal peptide directing secretion; it reads MKGTLLLLGLLVTGELSFQTTEA. N-linked (GlcNAc...) asparagine glycosylation occurs at asparagine 50.

This sequence belongs to the secretoglobin family. Expressed in lacrimal gland, at higher level in males than females. Expressed in the submandibular gland.

It is found in the secreted. This chain is Secretoglobin family 2B member 20 (Scgb2b20), found in Mus musculus (Mouse).